A 182-amino-acid chain; its full sequence is ATP-dependent protease subunit HslV (182 aa).

Thr12 is a catalytic residue. Na(+) contacts are provided by Ala167, Cys170, and Thr173.

Belongs to the peptidase T1B family. HslV subfamily. In terms of assembly, a double ring-shaped homohexamer of HslV is capped on each side by a ring-shaped HslU homohexamer. The assembly of the HslU/HslV complex is dependent on binding of ATP.

It is found in the cytoplasm. It catalyses the reaction ATP-dependent cleavage of peptide bonds with broad specificity.. Allosterically activated by HslU binding. Protease subunit of a proteasome-like degradation complex believed to be a general protein degrading machinery. This is ATP-dependent protease subunit HslV from Chlorobium phaeobacteroides (strain DSM 266 / SMG 266 / 2430).